Here is a 492-residue protein sequence, read N- to C-terminus: Transmembrane protein 104 homolog (492 aa).

At 1-17 the chain is on the cytoplasmic side; that stretch reads MQSNTDSSTSGTYSQTV. Residues 18–38 form a helical membrane-spanning segment; the sequence is GLLYVFNLIVGTGALALPKAF. The Extracellular segment spans residues 39 to 44; sequence QTAGWL. A helical membrane pass occupies residues 45–65; it reads LSITLLTFSAFMSYVAATFVI. Topologically, residues 66 to 113 are cytoplasmic; it reads EALSVANAVLSKKRRVEYDDVVVADGPSTFEISKKVEVSEMASMFLSK. Residues 114–134 traverse the membrane as a helical segment; the sequence is VSLVFSYFAIIIYLFGDLAIY. At 135–176 the chain is on the extracellular side; it reads STTVPKSAMNIVCATINASTVKSSDPCHESWPEILTRMTVYR. A glycan (N-linked (GlcNAc...) asparagine) is linked at Asn151. A helical transmembrane segment spans residues 177–197; it reads FFVIIFVVVVCLPMVIAGITK. Topologically, residues 198–209 are cytoplasmic; the sequence is TRHIQIMTTLSR. A helical membrane pass occupies residues 210–230; it reads WAAFILMISLATMQLSSDGAA. Over 231–237 the chain is Extracellular; that stretch reads AHPPAYN. A helical membrane pass occupies residues 238–258; sequence FHGFGSLFGCAVYAFMCHHSI. Residues 259 to 274 are Cytoplasmic-facing; the sequence is PSLITPMRTKDNVFGK. Residues 275–295 traverse the membrane as a helical segment; it reads IALVYGVVGVFYFTLSLTGAF. The Extracellular segment spans residues 296 to 324; that stretch reads AFEHVQDIYTLNFFHDGNTSFIYSIIDYF. N-linked (GlcNAc...) asparagine glycosylation is present at Asn313. The chain crosses the membrane as a helical span at residues 325 to 345; it reads LALFPIITLTSSYPIIALTLI. At 346-392 the chain is on the cytoplasmic side; sequence NNFNVVKDILCPKVGQENESLLEADSLVEDNDTDDEREARNARNEKS. Residues 393-413 form a helical membrane-spanning segment; that stretch reads VFDVLVPALVLALPTFLSLLT. Over 414 to 415 the chain is Extracellular; sequence DD. A helical membrane pass occupies residues 416 to 436; the sequence is MLLLASITGSFPGVAVQFAIP. The Cytoplasmic segment spans residues 437-466; it reads CLLVTAARKHARSVLNFPVPRKNNSPFQSP. A helical membrane pass occupies residues 467 to 487; the sequence is IWIVLISSWAGFSMIMVLLNL. At 488 to 492 the chain is on the extracellular side; it reads VGVKF.

This sequence belongs to the TMEM104 family.

It localises to the membrane. This is Transmembrane protein 104 homolog from Caenorhabditis elegans.